A 294-amino-acid polypeptide reads, in one-letter code: ATP phosphoribosyltransferase (294 aa).

Belongs to the ATP phosphoribosyltransferase family. Long subfamily. It depends on Mg(2+) as a cofactor.

It localises to the cytoplasm. It catalyses the reaction 1-(5-phospho-beta-D-ribosyl)-ATP + diphosphate = 5-phospho-alpha-D-ribose 1-diphosphate + ATP. It participates in amino-acid biosynthesis; L-histidine biosynthesis; L-histidine from 5-phospho-alpha-D-ribose 1-diphosphate: step 1/9. With respect to regulation, feedback inhibited by histidine. Functionally, catalyzes the condensation of ATP and 5-phosphoribose 1-diphosphate to form N'-(5'-phosphoribosyl)-ATP (PR-ATP). Has a crucial role in the pathway because the rate of histidine biosynthesis seems to be controlled primarily by regulation of HisG enzymatic activity. In Prosthecochloris aestuarii (strain DSM 271 / SK 413), this protein is ATP phosphoribosyltransferase.